A 39-amino-acid chain; its full sequence is Osmotin-like protein (39 aa).

It belongs to the thaumatin family. Contains intrachain disulfide bonds.

May be an important antifungal protein. This chain is Osmotin-like protein, found in Hevea brasiliensis (Para rubber tree).